Here is a 110-residue protein sequence, read N- to C-terminus: Parvalbumin alpha (110 aa).

An N-acetylserine modification is found at Ser-2. Residues Ser-2 and Ser-24 each carry the phosphoserine modification. 2 consecutive EF-hand domains span residues 39 to 74 and 78 to 110; these read KSAD…FSPD and LSAK…VAES. Ca(2+) is bound by residues Asp-52, Asp-54, Ser-56, Phe-58, Glu-60, Glu-63, Asp-91, Asp-93, Asp-95, Lys-97, and Glu-102.

The protein belongs to the parvalbumin family.

In terms of biological role, in muscle, parvalbumin is thought to be involved in relaxation after contraction. It binds two calcium ions. The chain is Parvalbumin alpha (PVALB) from Macaca fuscata fuscata (Japanese macaque).